The sequence spans 325 residues: ATP phosphoribosyltransferase (325 aa).

This sequence belongs to the ATP phosphoribosyltransferase family. Long subfamily. Requires Mg(2+) as cofactor.

It is found in the cytoplasm. The enzyme catalyses 1-(5-phospho-beta-D-ribosyl)-ATP + diphosphate = 5-phospho-alpha-D-ribose 1-diphosphate + ATP. It participates in amino-acid biosynthesis; L-histidine biosynthesis; L-histidine from 5-phospho-alpha-D-ribose 1-diphosphate: step 1/9. Its activity is regulated as follows. Feedback inhibited by histidine. Catalyzes the condensation of ATP and 5-phosphoribose 1-diphosphate to form N'-(5'-phosphoribosyl)-ATP (PR-ATP). Has a crucial role in the pathway because the rate of histidine biosynthesis seems to be controlled primarily by regulation of HisG enzymatic activity. The polypeptide is ATP phosphoribosyltransferase (Bradyrhizobium diazoefficiens (strain JCM 10833 / BCRC 13528 / IAM 13628 / NBRC 14792 / USDA 110)).